Reading from the N-terminus, the 175-residue chain is Catabolic 3-dehydroquinase (175 aa).

Catalysis depends on Tyr26, which acts as the Proton acceptor. Substrate contacts are provided by Asn104, His110, and Asp117. The active-site Proton donor is the His130. Residues 131–132 (VS) and Arg141 each bind substrate.

This sequence belongs to the type-II 3-dehydroquinase family. Homododecamer. Adopts a ring-like structure, composed of an arrangement of two hexameric rings stacked on top of one another.

The enzyme catalyses 3-dehydroquinate = 3-dehydroshikimate + H2O. The protein operates within aromatic compound metabolism; 3,4-dihydroxybenzoate biosynthesis; 3,4-dihydroxybenzoate from 3-dehydroquinate: step 1/2. Is involved in the catabolism of quinate. Allows the utilization of quinate as carbon source via the beta-ketoadipate pathway. The sequence is that of Catabolic 3-dehydroquinase from Sordaria macrospora (strain ATCC MYA-333 / DSM 997 / K(L3346) / K-hell).